The primary structure comprises 274 residues: Mitochondrial S-adenosylmethionine carrier protein (274 aa).

3 Solcar repeats span residues 4-77 (PGFV…VKWF), 86-168 (LTPM…LKAL), and 177-265 (VDSW…THSL). The next 6 helical transmembrane spans lie at 5-25 (GFVAALVAGGVAGVSVDLILF), 49-69 (IYAGVPSAAIGSFPNAAAFFI), 85-105 (YLTPMKHMLAASAGEVVACLI), 142-162 (RGYKSTVLREIPFSLVQFPLW), 182-202 (SAVCGAFAGGFAAAVTTPLDV), and 238-258 (FAGVFPRMAAISLGGFIFLGA).

This sequence belongs to the mitochondrial carrier (TC 2.A.29) family. In terms of tissue distribution, widely expressed. Highly expressed in testis, with moderate expression in brain, heart, kidney, lung, skeletal muscle, pancreas, small intestine and liver, and low expression in spleen.

The protein localises to the mitochondrion inner membrane. The enzyme catalyses S-adenosyl-L-homocysteine(out) + S-adenosyl-L-methionine(in) = S-adenosyl-L-homocysteine(in) + S-adenosyl-L-methionine(out). Its activity is regulated as follows. Strongly inhibited by tannic acid and Bromocresol Purple. In terms of biological role, mitochondrial S-adenosyl-L-methionine/S-adenosyl-L-homocysteine antiporter. Mediates the exchange of cytosolic S-adenosyl-L-methionine, the predominant methyl-group donor for macromolecule methylation processes, for mitochondrial S-adenosylhomocysteine(SAH), a by-product of methylation reactions. This Homo sapiens (Human) protein is Mitochondrial S-adenosylmethionine carrier protein.